The following is a 391-amino-acid chain: Extracellular metalloproteinase 3 (391 aa).

Positions 1-9 (HNVVDYVAS) are excised as a propeptide. Asn-173 is a glycosylation site (N-linked (GlcNAc...) asparagine). A Zn(2+)-binding site is contributed by His-192. The active site involves Glu-193. Residue His-196 participates in Zn(2+) binding. N-linked (GlcNAc...) asparagine glycans are attached at residues Asn-243 and Asn-385.

Belongs to the peptidase M36 family. Zn(2+) is required as a cofactor.

The protein resides in the secreted. Its function is as follows. Secreted metalloproteinase probably acting as a virulence factor. The polypeptide is Extracellular metalloproteinase 3 (MEP3) (Trichophyton soudanense).